The following is a 97-amino-acid chain: Co-chaperonin GroES (97 aa).

The protein belongs to the GroES chaperonin family. Heptamer of 7 subunits arranged in a ring. Interacts with the chaperonin GroEL.

It localises to the cytoplasm. In terms of biological role, together with the chaperonin GroEL, plays an essential role in assisting protein folding. The GroEL-GroES system forms a nano-cage that allows encapsulation of the non-native substrate proteins and provides a physical environment optimized to promote and accelerate protein folding. GroES binds to the apical surface of the GroEL ring, thereby capping the opening of the GroEL channel. The polypeptide is Co-chaperonin GroES (Aeromonas salmonicida).